We begin with the raw amino-acid sequence, 744 residues long: MASEGASIPSPVVRQIDKQFLICSICLERYKNPKVLPCLHTFCERCLQNYIPAHSLTLSCPVCRQTSILPEKGVAALQNNFFITNLMDVLQRTPGSNGEDPSILQTVTAVAAGKPLSCPNHDGNVMEFYCQSCETAMCRECTEGEHAEHPTVPLKDVVEQHKASLQVQLDAVNKRLPEIDSALQFISEIIHQLTNQKASIVDDIHSTFDELQKTLNVRKSVLLMELEVNYGLKHKVLQSQLDTLLQGQESIKSCSNFTAQALNHGTETEVLLVKKQMSEKLNELADQDFPLHPRENDQLDFIVETEGLKKSIHNLGTILTTNAVASETVATGEGLRQTIIGQPMSVTITTKDKDGELCKTGNAYLTAELSTPDGSVADGEILDNKNGTYEFLYTVQKEGDFTLSLRLYDQHIRGSPFKLKVIRSADVSPTTEGVKRRVKSPGSGHVKQKAVKRPASMYSTGKRKENPIEDDLIFRVGTKGRNKGEFTNLQGVAASTSGKILIADSNNQCVQIFSNDGQFKSRFGIRGRSPGQLQRPTGVAVHPSGDIIIADYDNKWVSIFSNDGKFKTKIGSGKLMGPKGVSVDRNGHIIVVDNKACCVFIFQPNGKIVTRFGSRGNGDRQFAGPHFAAVNSSNEIIITDFHNHSVKVFNQEGEFMLKFGSNGEGNGQFNAPTGVAVDSNGNIIVADWGNSRIQVFDGSGSFLSYINTSADPLYGPQGLALTSDGHVVVADSGNHCFKVYRYLQ.

Ser10 is subject to Phosphoserine. An RING-type zinc finger spans residues 23–64 (CSICLERYKNPKVLPCLHTFCERCLQNYIPAHSLTLSCPVCR). The B box-type zinc finger occupies 113 to 154 (GKPLSCPNHDGNVMEFYCQSCETAMCRECTEGEHAEHPTVPL). Zn(2+) is bound by residues Cys118, His121, Cys141, and His146. The Filamin repeat unit spans residues 320 to 421 (TTNAVASETV…IRGSPFKLKV (102 aa)). Phosphothreonine is present on Thr371. Phosphoserine is present on residues Ser375, Ser424, and Ser428. Positions 432–462 (EGVKRRVKSPGSGHVKQKAVKRPASMYSTGK) are disordered. NHL repeat units follow at residues 473–516 (IFRV…FSND), 520–563 (KSRF…FSND), 564–605 (GKFK…FQPN), 609–652 (VTRF…FNQE), 656–699 (MLKF…FDGS), and 700–743 (GSFL…YRYL).

Belongs to the TRIM/RBCC family. In terms of assembly, forms homooligomers. Interacts with TRIM3; this interaction reduces TRIM2 activity. Interacts with myosin V; myosin V may not be a substrate for ubiquitination. Interacts with NEFL. Interacts with phosphorylated BCL2L11. Interacts with SIRPA. Post-translationally, RING-type zinc finger-dependent and UBE2D1-dependent autoubiquitination.

The catalysed reaction is S-ubiquitinyl-[E2 ubiquitin-conjugating enzyme]-L-cysteine + [acceptor protein]-L-lysine = [E2 ubiquitin-conjugating enzyme]-L-cysteine + N(6)-ubiquitinyl-[acceptor protein]-L-lysine.. It functions in the pathway protein modification; protein ubiquitination. UBE2D1-dependent E3 ubiquitin-protein ligase that mediates the ubiquitination of NEFL and of phosphorylated BCL2L11. Plays a neuroprotective function. May play a role in neuronal rapid ischemic tolerance. Plays a role in antiviral immunity and limits New World arenavirus infection independently of its ubiquitin ligase activity. This Rattus norvegicus (Rat) protein is Tripartite motif-containing protein 2 (Trim2).